Reading from the N-terminus, the 1065-residue chain is Carbamoyl phosphate synthase large chain (1065 aa).

A carboxyphosphate synthetic domain region spans residues 1–401 (MPKRTDIETI…AMLKAVRSLE (401 aa)). ATP contacts are provided by R129, R169, G175, G176, K208, I210, E215, G241, I242, H243, Q284, and E298. The ATP-grasp 1 domain occupies 133–327 (RNLMYELGAP…IAKLAAKIAV (195 aa)). Residues Q284, E298, and N300 each contribute to the Mg(2+) site. Residues Q284, E298, and N300 each coordinate Mn(2+). Residues 402–546 (TGQVHLELKH…YGTYEEENES (145 aa)) are oligomerization domain. The tract at residues 547–929 (IKSEKPSVVV…ALYKGLVAAG (383 aa)) is carbamoyl phosphate synthetic domain. Residues 671 to 861 (EQALRDLNIP…MANIATKAIL (191 aa)) enclose the ATP-grasp 2 domain. R707, R746, L748, E752, G777, V778, H779, S780, Q820, and E832 together coordinate ATP. 3 residues coordinate Mg(2+): Q820, E832, and N834. Residues Q820, E832, and N834 each contribute to the Mn(2+) site. In terms of domain architecture, MGS-like spans 930-1065 (MEIRTEGTVL…EEMPKAEVVH (136 aa)). The segment at 930 to 1065 (MEIRTEGTVL…EEMPKAEVVH (136 aa)) is allosteric domain.

The protein belongs to the CarB family. In terms of assembly, composed of two chains; the small (or glutamine) chain promotes the hydrolysis of glutamine to ammonia, which is used by the large (or ammonia) chain to synthesize carbamoyl phosphate. Tetramer of heterodimers (alpha,beta)4. It depends on Mg(2+) as a cofactor. Requires Mn(2+) as cofactor.

The enzyme catalyses hydrogencarbonate + L-glutamine + 2 ATP + H2O = carbamoyl phosphate + L-glutamate + 2 ADP + phosphate + 2 H(+). It catalyses the reaction hydrogencarbonate + NH4(+) + 2 ATP = carbamoyl phosphate + 2 ADP + phosphate + 2 H(+). It participates in amino-acid biosynthesis; L-arginine biosynthesis; carbamoyl phosphate from bicarbonate: step 1/1. The protein operates within pyrimidine metabolism; UMP biosynthesis via de novo pathway; (S)-dihydroorotate from bicarbonate: step 1/3. Large subunit of the glutamine-dependent carbamoyl phosphate synthetase (CPSase). CPSase catalyzes the formation of carbamoyl phosphate from the ammonia moiety of glutamine, carbonate, and phosphate donated by ATP, constituting the first step of 2 biosynthetic pathways, one leading to arginine and/or urea and the other to pyrimidine nucleotides. The large subunit (synthetase) binds the substrates ammonia (free or transferred from glutamine from the small subunit), hydrogencarbonate and ATP and carries out an ATP-coupled ligase reaction, activating hydrogencarbonate by forming carboxy phosphate which reacts with ammonia to form carbamoyl phosphate. The sequence is that of Carbamoyl phosphate synthase large chain from Lysinibacillus sphaericus (strain C3-41).